The following is a 473-amino-acid chain: Photosystem II CP43 reaction center protein (473 aa).

The propeptide occupies 1 to 14 (MKTLYSPRRFYPVE). Residue T15 is modified to N-acetylthreonine. T15 carries the post-translational modification Phosphothreonine. Transmembrane regions (helical) follow at residues 69-93 (LFEVAHFVPEKPMYEQGLILLPHLA), 134-155 (LLGPETLEESFPFFGYVWKDRN), 178-200 (KALYFGGVYDTWAPGGGDVRKIS), 255-275 (KPFAWARRALVWSGEAYLSYS), and 291-312 (WFNNTAYPSEFYGPTGPEASQA). E367 contacts [CaMn4O5] cluster. The chain crosses the membrane as a helical span at residues 447–471 (RARAAAAGFEKGIDRDLEPVLFMTP).

The protein belongs to the PsbB/PsbC family. PsbC subfamily. In terms of assembly, PSII is composed of 1 copy each of membrane proteins PsbA, PsbB, PsbC, PsbD, PsbE, PsbF, PsbH, PsbI, PsbJ, PsbK, PsbL, PsbM, PsbT, PsbX, PsbY, PsbZ, Psb30/Ycf12, at least 3 peripheral proteins of the oxygen-evolving complex and a large number of cofactors. It forms dimeric complexes. Binds multiple chlorophylls and provides some of the ligands for the Ca-4Mn-5O cluster of the oxygen-evolving complex. It may also provide a ligand for a Cl- that is required for oxygen evolution. PSII binds additional chlorophylls, carotenoids and specific lipids. serves as cofactor.

Its subcellular location is the plastid. It localises to the chloroplast thylakoid membrane. One of the components of the core complex of photosystem II (PSII). It binds chlorophyll and helps catalyze the primary light-induced photochemical processes of PSII. PSII is a light-driven water:plastoquinone oxidoreductase, using light energy to abstract electrons from H(2)O, generating O(2) and a proton gradient subsequently used for ATP formation. The polypeptide is Photosystem II CP43 reaction center protein (Ranunculus macranthus (Large buttercup)).